A 131-amino-acid chain; its full sequence is Hypocretin neuropeptide precursor (131 aa).

The signal sequence occupies residues 1 to 33 (MNPPFAKVSWATVTLLLLLLLLPPAVLSPGAAA). Gln34 carries the pyrrolidone carboxylic acid modification. 2 cysteine pairs are disulfide-bonded: Cys39–Cys45 and Cys40–Cys47. Leu66 is subject to Leucine amide. Residue Met97 is modified to Methionine amide. The propeptide at 98–131 (GRRAGAEPAPRLCPGRRCLAAAASSVAPGGRSGI) is removed in mature form.

This sequence belongs to the orexin family. In terms of processing, specific enzymatic cleavages at paired basic residues yield the different active peptides.

Its subcellular location is the rough endoplasmic reticulum. It is found in the cytoplasmic vesicle. It localises to the synapse. Functionally, neuropeptides that play a significant role in the regulation of food intake and sleep-wakefulness, possibly by coordinating the complex behavioral and physiologic responses of these complementary homeostatic functions. A broader role in the homeostatic regulation of energy metabolism, autonomic function, hormonal balance and the regulation of body fluids, is also suggested. In terms of biological role, binds to orexin receptors HCRTR1/OX1R and HCRTR2/OX2R with a high affinity. Stimulates food intake. Modulates pituitary luteinizing hormone secretion in an ovarian steroid-dependent manner. Its function is as follows. Binds to orexin receptor HCRTR2/OX2R only. Stimulates food intake. Modulates pituitary luteinizing hormone secretion in an ovarian steroid-dependent manner. This Sus scrofa (Pig) protein is Hypocretin neuropeptide precursor (HCRT).